We begin with the raw amino-acid sequence, 445 residues long: TNF receptor-associated factor family protein DDB_G0290971 (445 aa).

An RING-type; degenerate zinc finger spans residues 23 to 67 (CPICFDLYYSSSSKKEVFQCRDGHLACKSCWSDSLLNKKECMICR). TRAF-type zinc fingers lie at residues 133–186 (KHQV…QLDA) and 186–242 (AHAL…ESID). The stretch at 269–307 (QLELVECKNQIYQINNKYEKLLERVIKLEQLSMDASNKL) forms a coiled coil. The region spanning 314 to 441 (KNSIIFATFS…EDKLVIGLRI (128 aa)) is the MATH domain.

This sequence belongs to the TNF receptor-associated factor family. A subfamily.

The protein resides in the cytoplasm. Its function is as follows. Probable adapter protein and signal transducer that links members of the tumor necrosis factor receptor family to different signaling pathways by association with the receptor cytoplasmic domain and kinases. The polypeptide is TNF receptor-associated factor family protein DDB_G0290971 (Dictyostelium discoideum (Social amoeba)).